Here is a 144-residue protein sequence, read N- to C-terminus: Small ribosomal subunit protein bS6 (144 aa).

The interval 95–144 (PVTTPSPMMQDDKSKPDENSRGTAAPTVNVADDSASGAQVVAAEENDTQS) is disordered. A compositionally biased stretch (basic and acidic residues) spans 104–114 (QDDKSKPDENS).

Belongs to the bacterial ribosomal protein bS6 family.

Binds together with bS18 to 16S ribosomal RNA. The polypeptide is Small ribosomal subunit protein bS6 (Nitrosomonas eutropha (strain DSM 101675 / C91 / Nm57)).